The sequence spans 478 residues: MXNFTPVNGSSANQSVRLVTAAHNHLETVEMVFIATVTGSLSLVTVVGNILVMLSIKVNRQLQTVNNYFLFSLGCADLIIGAFSMNLYTLYIIKGYWPLGAVVCDLWLALDYVVSNASVMNLLIISFDRYFCVTKPLTYPARRTTKMAGLMIAAAWVLSFVLWAPAILFWQFVVGKRTVPDNQCFIQFLSNPAVTFGTAIAAFYLPVVIMTVLYIHISLASRSRVHKHRPEGPKEKKAKTLAFLKSPLMKPSIKKPPPGGASREELRNGKLEEAPPPALPPPPRPVPDKDTSNESSSGSATQNTKERPPTELSTAEATTPALPAPTLQPRTLNPASKWSKIQIVTKQTGNECVTAIEIVPATPAGMRPAANVARKFASIARNQVRKKRQMAARERKVTRTIFAILLAFILTWTPYNVMVLVNTFCQSCIPERVWSIGYWLCYVNSTINPACYALCNATFKKTFRHLLLCQYRNIGTAR.

Residues 1-30 (MXNFTPVNGSSANQSVRLVTAAHNHLETVE) are Extracellular-facing. N-linked (GlcNAc...) asparagine glycosylation is found at asparagine 8 and asparagine 13. Residues 31 to 53 (MVFIATVTGSLSLVTVVGNILVM) traverse the membrane as a helical segment. The Cytoplasmic portion of the chain corresponds to 54-67 (LSIKVNRQLQTVNN). A helical transmembrane segment spans residues 68–88 (YFLFSLGCADLIIGAFSMNLY). At 89 to 105 (TLYIIKGYWPLGAVVCD) the chain is on the extracellular side. Cysteine 104 and cysteine 184 are oxidised to a cystine. The chain crosses the membrane as a helical span at residues 106–127 (LWLALDYVVSNASVMNLLIISF). The Cytoplasmic segment spans residues 128–147 (DRYFCVTKPLTYPARRTTKM). A helical transmembrane segment spans residues 148-170 (AGLMIAAAWVLSFVLWAPAILFW). The Extracellular segment spans residues 171 to 192 (QFVVGKRTVPDNQCFIQFLSNP). The helical transmembrane segment at 193–215 (AVTFGTAIAAFYLPVVIMTVLYI) threads the bilayer. At 216–400 (HISLASRSRV…AARERKVTRT (185 aa)) the chain is on the cytoplasmic side. The interval 271–333 (LEEAPPPALP…APTLQPRTLN (63 aa)) is disordered. Residues 274–285 (APPPALPPPPRP) are compositionally biased toward pro residues. The span at 293 to 303 (NESSSGSATQN) shows a compositional bias: polar residues. Residues 310–332 (TELSTAEATTPALPAPTLQPRTL) are compositionally biased toward low complexity. Residues 401 to 421 (IFAILLAFILTWTPYNVMVLV) form a helical membrane-spanning segment. The Extracellular portion of the chain corresponds to 422 to 435 (NTFCQSCIPERVWS). The helical transmembrane segment at 436 to 455 (IGYWLCYVNSTINPACYALC) threads the bilayer. At 456–478 (NATFKKTFRHLLLCQYRNIGTAR) the chain is on the cytoplasmic side. Residues threonine 458, threonine 462, and threonine 476 each carry the phosphothreonine modification.

This sequence belongs to the G-protein coupled receptor 1 family. Muscarinic acetylcholine receptor subfamily. CHRM4 sub-subfamily.

It is found in the cell membrane. The protein resides in the postsynaptic cell membrane. In terms of biological role, the muscarinic acetylcholine receptor mediates various cellular responses, including inhibition of adenylate cyclase, breakdown of phosphoinositides and modulation of potassium channels through the action of G proteins. Primary transducing effect is inhibition of adenylate cyclase. This Rattus norvegicus (Rat) protein is Muscarinic acetylcholine receptor M4 (Chrm4).